A 313-amino-acid chain; its full sequence is 4-hydroxy-3-methylbut-2-enyl diphosphate reductase (313 aa).

Position 12 (C12) interacts with [4Fe-4S] cluster. H41 and H74 together coordinate (2E)-4-hydroxy-3-methylbut-2-enyl diphosphate. Dimethylallyl diphosphate is bound by residues H41 and H74. Residues H41 and H74 each coordinate isopentenyl diphosphate. C96 lines the [4Fe-4S] cluster pocket. Residue H124 coordinates (2E)-4-hydroxy-3-methylbut-2-enyl diphosphate. Position 124 (H124) interacts with dimethylallyl diphosphate. H124 provides a ligand contact to isopentenyl diphosphate. The Proton donor role is filled by E126. T164 contacts (2E)-4-hydroxy-3-methylbut-2-enyl diphosphate. C194 contributes to the [4Fe-4S] cluster binding site. Positions 222, 223, 224, and 266 each coordinate (2E)-4-hydroxy-3-methylbut-2-enyl diphosphate. Dimethylallyl diphosphate is bound by residues S222, S223, N224, and S266. 4 residues coordinate isopentenyl diphosphate: S222, S223, N224, and S266.

It belongs to the IspH family. [4Fe-4S] cluster serves as cofactor.

It catalyses the reaction isopentenyl diphosphate + 2 oxidized [2Fe-2S]-[ferredoxin] + H2O = (2E)-4-hydroxy-3-methylbut-2-enyl diphosphate + 2 reduced [2Fe-2S]-[ferredoxin] + 2 H(+). It carries out the reaction dimethylallyl diphosphate + 2 oxidized [2Fe-2S]-[ferredoxin] + H2O = (2E)-4-hydroxy-3-methylbut-2-enyl diphosphate + 2 reduced [2Fe-2S]-[ferredoxin] + 2 H(+). It participates in isoprenoid biosynthesis; dimethylallyl diphosphate biosynthesis; dimethylallyl diphosphate from (2E)-4-hydroxy-3-methylbutenyl diphosphate: step 1/1. It functions in the pathway isoprenoid biosynthesis; isopentenyl diphosphate biosynthesis via DXP pathway; isopentenyl diphosphate from 1-deoxy-D-xylulose 5-phosphate: step 6/6. Functionally, catalyzes the conversion of 1-hydroxy-2-methyl-2-(E)-butenyl 4-diphosphate (HMBPP) into a mixture of isopentenyl diphosphate (IPP) and dimethylallyl diphosphate (DMAPP). Acts in the terminal step of the DOXP/MEP pathway for isoprenoid precursor biosynthesis. This Burkholderia pseudomallei (strain 1026b) protein is 4-hydroxy-3-methylbut-2-enyl diphosphate reductase.